Consider the following 346-residue polypeptide: Thioredoxin domain-containing protein R362 (346 aa).

One can recognise a Thioredoxin domain in the interval 212–345; the sequence is LTNLSNTEAN…IVKFIDETMS (134 aa).

Its subcellular location is the virion. This Acanthamoeba polyphaga (Amoeba) protein is Thioredoxin domain-containing protein R362.